The sequence spans 387 residues: 1-deoxy-D-xylulose 5-phosphate reductoisomerase (387 aa).

The NADPH site is built by threonine 10, glycine 11, serine 12, valine 13, asparagine 38, and asparagine 119. Lysine 120 is a binding site for 1-deoxy-D-xylulose 5-phosphate. NADPH is bound at residue glutamate 121. Aspartate 145 is a binding site for Mn(2+). The 1-deoxy-D-xylulose 5-phosphate site is built by serine 146, glutamate 147, serine 170, and histidine 193. Mn(2+) is bound at residue glutamate 147. Glycine 199 is a binding site for NADPH. Residues serine 206, asparagine 211, lysine 212, and glutamate 215 each coordinate 1-deoxy-D-xylulose 5-phosphate. A Mn(2+)-binding site is contributed by glutamate 215.

It belongs to the DXR family. Mg(2+) is required as a cofactor. It depends on Mn(2+) as a cofactor.

It catalyses the reaction 2-C-methyl-D-erythritol 4-phosphate + NADP(+) = 1-deoxy-D-xylulose 5-phosphate + NADPH + H(+). Its pathway is isoprenoid biosynthesis; isopentenyl diphosphate biosynthesis via DXP pathway; isopentenyl diphosphate from 1-deoxy-D-xylulose 5-phosphate: step 1/6. Functionally, catalyzes the NADPH-dependent rearrangement and reduction of 1-deoxy-D-xylulose-5-phosphate (DXP) to 2-C-methyl-D-erythritol 4-phosphate (MEP). The chain is 1-deoxy-D-xylulose 5-phosphate reductoisomerase from Wolbachia pipientis wMel.